The chain runs to 201 residues: Hydroxymethylphosphonate dioxygenase (201 aa).

Fe cation is bound by residues His47, His71, Asp72, His94, His117, and Asp174.

Requires Fe(2+) as cofactor.

It carries out the reaction hydroxymethylphosphonate + O2 = formate + phosphate + 2 H(+). The catalysed reaction is (1R)-(2-amino-1-hydroxyethyl)phosphonate + O2 = glycine + phosphate + 2 H(+). The enzyme catalyses (1R)-(1-hydroxyethyl)phosphonate + O2 = acetate + phosphate + 2 H(+). Functionally, part of an oxidative pathway for utilization of methylphosphonic acid as a phosphate source. Catalyzes the oxidation of hydroxymethylphosphonic acid to produce formate and phosphate. Can also use (1R)-(2-amino-1-hydroxyethyl)phosphonic acid and (R)-1-hydroxyethylphosphonic acid with similar catalytic efficiency. This is Hydroxymethylphosphonate dioxygenase from Gimesia maris (strain ATCC 29201 / DSM 8797 / 534-30) (Planctomyces maris).